The chain runs to 368 residues: Putative zinc metalloprotease Cj1068 (368 aa).

His-36 contacts Zn(2+). Residue Glu-37 is part of the active site. His-40 provides a ligand contact to Zn(2+). The next 3 membrane-spanning stretches (helical) occupy residues 112-134, 291-313, and 338-360; these read IYIL…IIIG, FTLL…LLPI, and TFEY…ATYN. One can recognise a PDZ domain in the interval 126 to 197; it reads AFFLYIIIGN…LKILINREGK (72 aa).

The protein belongs to the peptidase M50B family. It depends on Zn(2+) as a cofactor.

The protein localises to the cell inner membrane. The sequence is that of Putative zinc metalloprotease Cj1068 from Campylobacter jejuni subsp. jejuni serotype O:2 (strain ATCC 700819 / NCTC 11168).